The following is a 349-amino-acid chain: Isopentenyl-diphosphate delta-isomerase (349 aa).

6 to 7 (RK) provides a ligand contact to substrate. Residues 62-64 (AMT), Ser93, and Asn122 contribute to the FMN site. Gln152 contacts substrate. Glu153 is a binding site for Mg(2+). FMN is bound by residues Lys184, Thr214, 258-259 (GG), and 280-281 (AG).

Belongs to the IPP isomerase type 2 family. Homooctamer. Dimer of tetramers. The cofactor is FMN. It depends on NADPH as a cofactor. Mg(2+) is required as a cofactor.

The protein resides in the cytoplasm. It carries out the reaction isopentenyl diphosphate = dimethylallyl diphosphate. In terms of biological role, involved in the biosynthesis of isoprenoids. Catalyzes the 1,3-allylic rearrangement of the homoallylic substrate isopentenyl (IPP) to its allylic isomer, dimethylallyl diphosphate (DMAPP). This Bacillus cereus (strain AH187) protein is Isopentenyl-diphosphate delta-isomerase.